Reading from the N-terminus, the 411-residue chain is MARINDHFLKLKAGYLFPEIARRVQAFAAAHPEAQIIKMGIGDVTEPLPEACRTAMIRAVEEMGERATFRGYGPEQGYEWLRQAIARHDFQARGCDIDASEIFISDGSKCDCGNILDILGHDNTIAITDPVYPVYVDTNVMAGHTGPANERGEYEGLVYLPLTAENHFTASLPQQKVDVIYLCFPNNPTGAVATREHLQAWVDYARAHNSLILFDAAYEAYITEPGIPHSIYEIPGARECAIEFRSFSKTAGFTGTRCAFTVVPKSLRGQAADGSWVDLWSLWYRRQSTKFNGVAYIVQRGAEAVYSEAGQVQVRALVQFYLENARIIREQLATAGIQAYGGVNAPYVWVKAPEGLSSWEFFDKLLHTCHVVGTPGSGFGSAGEGYLRLSAFNSRANVEEAMRRIVSVFGS.

2 residues coordinate substrate: Tyr-15 and Gly-42. Pyridoxal 5'-phosphate is bound by residues Tyr-72, 108–109, Tyr-132, Asn-187, Tyr-218, and 246–248; these read SK and SFS. Positions 109, 132, and 187 each coordinate substrate. The residue at position 249 (Lys-249) is an N6-(pyridoxal phosphate)lysine. Residues Arg-257 and Asn-292 each coordinate pyridoxal 5'-phosphate. The substrate site is built by Asn-292 and Arg-388.

The protein belongs to the class-I pyridoxal-phosphate-dependent aminotransferase family. LL-diaminopimelate aminotransferase subfamily. In terms of assembly, homodimer. It depends on pyridoxal 5'-phosphate as a cofactor.

It carries out the reaction (2S,6S)-2,6-diaminopimelate + 2-oxoglutarate = (S)-2,3,4,5-tetrahydrodipicolinate + L-glutamate + H2O + H(+). Its pathway is amino-acid biosynthesis; L-lysine biosynthesis via DAP pathway; LL-2,6-diaminopimelate from (S)-tetrahydrodipicolinate (aminotransferase route): step 1/1. Its function is as follows. Involved in the synthesis of meso-diaminopimelate (m-DAP or DL-DAP), required for both lysine and peptidoglycan biosynthesis. Catalyzes the direct conversion of tetrahydrodipicolinate to LL-diaminopimelate. This chain is LL-diaminopimelate aminotransferase, found in Synechococcus sp. (strain JA-3-3Ab) (Cyanobacteria bacterium Yellowstone A-Prime).